Here is a 2200-residue protein sequence, read N- to C-terminus: MENTENKILDKRKEYEKEIYNKEIDQCDDNNINREINYLVYRWLNSQNGIDKNLVTSLFQDFNKNDLLPKKVNWLGQQENFTSNELNEKYKHIQSDHIKSIFSSYRDLAIQHGHFSKLPFQINTLLGDNAYSMIPKGFNDKKDNDNNGDNNLLNKEKIPDNNNNNNSSSSSSSNSNTNKKKIKVSYLYNRPQVVTPTALQPENTTNTTTTTTATTTTTTTTTTTNNTNVQTTPTNTTNTTLTTPPPQIPILPTTVPDIDIQQQQQQQQQQQQQTISKSKNEDINNNNNILSIQRNRYKSFTMMRFTENPFDFSIPIPVKLSGQEVISKSLKSTSQLPISFYSNFKNSLIVYGHKAPTYCLQFDKSGRLYFTGSDDHLVKVWSTYSGRLIATLRGHLGDITDMCTSFDNSLLATASNDNVIRIWNLNSNQYDSIASLTGHDPSVNNTITSISFLSNPTTRLLVSSDSFGQCKLWNLDKSNHVISLSLNDNGSQSTINTGNINDEQIDTEMITDAEVPILTATTITTAITTTATTATATIATTTTTTTPGKTNEITGTTMNKGGTLIVASVDSSLKIWSTLFNPPKLVNTLEGHPTTILALQYSHGSDAIVSGSYDGTVIIWRHSGGPKWDHVIFNIKNTQRPNQANSHPKKVARSKATFKNVIWSHDDRFIITTDYNMIRVWNSLDGSFHLEMAEHTSEVYVTSCHPFDSRLIMSSGYDSQVILWSIETGEIIKKFVLQEPGFQCQILDGCFSPDGQKFIVTNSTGKWFMFELGLGSDINNLKKLVPNEQYFLTDYHPLIRDANGNVLDELTQTPPHLMPRAMLVNYQGLPYPDHYNFTDQDAIYHLEPYKNTSNYKRDLKIQKEFERREVYTFNQGNPSNIPSHPIVIFVASEPKPQPKKIPKKPRRPWDQIEEEIIDDEIIFPSDPSDEDFNPSDASENSSEDEQQQQHQQQQQDDDDDDDDDEDYDSDGKKMSTRKKSKIKADKRKKRLLKQSKKFTRRNTSPSKFNEIMNTFDLPEDDDNNSNNNNRKAVSNKRLSNKQKKRYNLINDGEIEMDDDDQYLNDNILDSDDNDYEHRNRYDNDEFSGSESYNGSDGGGGGGDDDSDNSSDNSSENDSSANGSDSDYSGSKSNKNKRGDKSKRNKKGKKNVKNKKVQKRGRKKSSTSSSSSTSHNQNHLTASALKKLNDIRKKKEILPVCPKWLSITSTTSETFYSPQVGDFIFYFYQGHTKYLEKFPPNGIESNLDNKSIVNYILNNNNINNNNNNNNNNNNNNNNNNNNNNNGVDDQQINSDDDDSQKIIKKSYQECIIKNLNYFISPDGTHKVVITLLPVFDQQVPPQNQNDESNFYTVIYHVSDIPDYLVLASKVRKSMLTDWTVPNKRFRMFYPASGWYNGTIIEISDSDPLFPNSPWENIKVLWDDTEEEDRVNYWEIDEKFDDDQNPQKIKEIKDENENEKVIENNQQQQQQQPQQQPQQQPIQNNQQLSINNTNVNNNNNNNNNNNNNNNNNNNNNNNNNNNNNSLNGGLVDYSGNNNNNNNNNFNYNSNNNLSMSGILDYTNFNNNNNNFMNYNMYQGNYNGMMMNNNTSNYSYLDPNNSNMYMQTYPQNSTMQNQQQPQLNNIYYNSQLQPTNYNYTNNFNTNYSNFNNSSSNIMNYNTNNNFNSPPTATTSNTTTTTTTTTETSNNNNNNNNNNNNNNNNNNFKDNILRIKIQYVESIEDEKIENLKKEMKEFLENDEITDIYSEPVDLKLYPLYIRFVPHPMDISTIIKRLESSYYRSLDAIYFDAKLIMIDAYVYNKPNTMVAKNSKLVFHRISDILKEAANYTPSDILLQSGGSFDSFTLKSMAADKDDSQLDDEDDSMVSGVTNDDDDDDDNLANNNHGNNKSRNGDGLEGDISISDSEHDNSKTGKNITRSLLSPSEDEGGINVNRTPSKRGRKKANATTTTTTTTTTTSSTPSKRLITGRLTRSRSNQSNEESDDDGFIDDNNSSHQNGGKILDDSDNDDKNQNGTDNDYNDDDDDDDNDGDSTNKKRKSIKNQTEPITKRQRTNRLIFEDEDEDDNNQEEDEEDYQEKPKPKPRSKQTTPKVTTPRKRGRKKIDQSEEEEDEDQSDVNSNNNSDNESGGEDGYSGEDGSESESNNGGDIDDEEFLNLLEKPKSKPKGRGRPSFKNNNNNNNINNNVNLTPSKRGRGRPPKSN.

3 disordered regions span residues 137–178 (GFND…SNTN), 194–245 (VTPT…TTPP), and 259–288 (DIQQ…NNNN). Composition is skewed to low complexity over residues 161 to 176 (NNNN…SNSN), 203 to 242 (NTTN…TTLT), and 259 to 273 (DIQQ…QQQQ). WD repeat units follow at residues 352–391 (GHKA…LIAT), 394–433 (GHLG…YDSI), 442–483 (SVNN…HVIS), 548–586 (GKTN…PKLV), 591–630 (GHPT…KWDH), 653–691 (RSKA…FHLE), 694–736 (EHTS…KKFV), and 741–780 (GFQC…DINN). Composition is skewed to acidic residues over residues 918 to 933 (DDEI…EDFN) and 955 to 968 (QDDD…EDYD). 4 disordered regions span residues 918–1180 (DDEI…NHLT), 1262–1297 (NNNN…DDDD), 1461–1538 (ENNQ…NNNN), and 1662–1703 (NFNS…NNNN). The span at 974-1000 (MSTRKKSKIKADKRKKRLLKQSKKFTR) shows a compositional bias: basic residues. A compositionally biased stretch (acidic residues) spans 1052–1074 (GEIEMDDDDQYLNDNILDSDDND). Over residues 1109–1132 (SSDNSSENDSSANGSDSDYSGSKS) the composition is skewed to low complexity. Residues 1133–1164 (NKNKRGDKSKRNKKGKKNVKNKKVQKRGRKKS) show a composition bias toward basic residues. 2 stretches are compositionally biased toward low complexity: residues 1262 to 1292 (NNNN…QQIN) and 1461 to 1525 (ENNQ…NSLN). Residues 1722–1823 (EKIENLKKEM…HRISDILKEA (102 aa)) enclose the Bromo domain. Residues 1850–2200 (DKDDSQLDDE…RGRGRPPKSN (351 aa)) are disordered. A compositionally biased stretch (low complexity) spans 1878–1888 (LANNNHGNNKS). The segment covering 1910-1920 (TGKNITRSLLS) has biased composition (polar residues). The segment covering 1945 to 1958 (TTTTTTTTTTTSST) has biased composition (low complexity). 3 stretches are compositionally biased toward acidic residues: residues 2016-2028 (DYND…DNDG), 2057-2073 (EDED…EEDY), and 2104-2113 (SEEEEDEDQS). The span at 2114-2124 (DVNSNNNSDNE) shows a compositional bias: low complexity. Residues 2125–2138 (SGGEDGYSGEDGSE) show a composition bias toward acidic residues. Low complexity predominate over residues 2170 to 2185 (SFKNNNNNNNINNNVN). Basic residues predominate over residues 2190–2200 (KRGRGRPPKSN).

The protein is Bromodomain and WD repeat-containing DDB_G0285837 of Dictyostelium discoideum (Social amoeba).